A 454-amino-acid polypeptide reads, in one-letter code: Ribosomal protein uS12 methylthiotransferase RimO (454 aa).

The MTTase N-terminal domain occupies 14 to 125; the sequence is SKVAFSHVGC…IAKVLDRVEK (112 aa). 6 residues coordinate [4Fe-4S] cluster: cysteine 23, cysteine 59, cysteine 88, cysteine 163, cysteine 167, and cysteine 170. Positions 149–378 constitute a Radical SAM core domain; the sequence is DKNKFVAYLR…ISVQQNISKD (230 aa). The region spanning 381–452 is the TRAM domain; the sequence is QSYVGSKMKI…EYDLYGETLK (72 aa).

Belongs to the methylthiotransferase family. RimO subfamily. The cofactor is [4Fe-4S] cluster.

Its subcellular location is the cytoplasm. It carries out the reaction L-aspartate(89)-[ribosomal protein uS12]-hydrogen + (sulfur carrier)-SH + AH2 + 2 S-adenosyl-L-methionine = 3-methylsulfanyl-L-aspartate(89)-[ribosomal protein uS12]-hydrogen + (sulfur carrier)-H + 5'-deoxyadenosine + L-methionine + A + S-adenosyl-L-homocysteine + 2 H(+). Its function is as follows. Catalyzes the methylthiolation of an aspartic acid residue of ribosomal protein uS12. The chain is Ribosomal protein uS12 methylthiotransferase RimO from Prochlorococcus marinus (strain MIT 9215).